Consider the following 472-residue polypeptide: FAD-linked oxidoreductase azaL (472 aa).

A signal peptide spans 1–18; it reads MFRTILLCSLGLTTLSSA. N-linked (GlcNAc...) asparagine glycosylation is found at Asn-22, Asn-44, Asn-102, Asn-123, Asn-227, Asn-246, Asn-273, Asn-305, Asn-318, Asn-390, and Asn-415. The region spanning 54–228 is the FAD-binding PCMH-type domain; that stretch reads TTYDAPTYIG…TSATYKIYNA (175 aa).

This sequence belongs to the oxygen-dependent FAD-linked oxidoreductase family.

The protein operates within secondary metabolite biosynthesis. FAD-linked oxidoreductase; part of the gene cluster that mediates the biosynthesis of azaphilones, a class of fungal metabolites characterized by a highly oxygenated pyrano-quinone bicyclic core and exhibiting a broad range of bioactivities. In the first step, the non-reducing polyketide synthase azaA forms the hexaketide precursor from successive condensations of five malonyl-CoA units, presumably with a simple acetyl-CoA starter unit. The reactive polyketide chain then undergoes a PT-mediated C2-C7 cyclization to afford the aromatic ring and is eventually released as an aldehyde through the R-domain. The putative ketoreductase azaE is proposed to catalyze the reduction of the terminal ketone resulting in the early culture product FK17-P2a. The monooxygenase azaH was demonstrated to be the only enzyme required to convert FK17-P2a to azanigerone E. AzaH first hydroxylates the benzaldehyde intermediate FK17-P2a at C4, which triggers the formation of the pyran-ring to afford azanigerone E. In parallel, the 2,4-dimethylhexanoyl chain is synthesized by the HR-PKS azaB and is proposed to be transferred to the C4-hydroxyl of azanigerone E by the acyltransferase azaD directly from the ACP domain of azaB. Alternatively, the 2,4-dimethyl-hexanoyl chain may be offloaded from the HR-PKS as a carboxylic acid and converted to an acyl-CoA by azaF. The resulting acyl-CoA molecule could then be taken up as a substrate by AzaD to form azanigerone B. To yield the carboxylic acid substituent in azanigerone A, the hydroxypropyl side chain of azanigerone B would need to undergo a C-C oxidative cleavage catalyzed by cytochrome P450 AzaI. AzaI is proposed to act on a vicinal diol that leads to a C-C bond scission either through an alkoxyradical intermediate or a peroxy complex. In the biosynthesis of azanigerone A, azanigerone B first undergoes hydroxylation at C10, possibly catalyzed by one of the two FAD-dependent monooxygenases encoded in the cluster, azaG or azaL, resulting in the vicinal diol azanigerone C. Oxidative cleavage of azanigerone C by azaI would yield the corresponding aldehyde derivative of azanigerone A. Finally, the dehydrogenase azaJ is proposed to convert the aldehyde functional group into the carboxylic acid, completing the conversion from azanigerone B to azanigerone A. Alternatively, the oxidation of aldehyde to carboxylic acid may be catalyzed by the same P450 enzyme azaI via consecutive oxidation or by endogenous alcohol dehydrogenase. The chain is FAD-linked oxidoreductase azaL from Aspergillus niger (strain ATCC 1015 / CBS 113.46 / FGSC A1144 / LSHB Ac4 / NCTC 3858a / NRRL 328 / USDA 3528.7).